A 678-amino-acid chain; its full sequence is Catalase (678 aa).

A compositionally biased stretch (basic and acidic residues) spans 1 to 26; it reads MSNEREMQNKKDQQLESFRVEDEGKK. A disordered region spans residues 1 to 32; that stretch reads MSNEREMQNKKDQQLESFRVEDEGKKLTTNQG. Catalysis depends on residues H75 and N148. Y362 contacts heme.

Belongs to the catalase family. HPII subfamily. It depends on heme as a cofactor.

Its subcellular location is the cytoplasm. It carries out the reaction 2 H2O2 = O2 + 2 H2O. In terms of biological role, decomposes hydrogen peroxide into water and oxygen; serves to protect cells from the toxic effects of hydrogen peroxide. The protein is Catalase (katE) of Alkalihalophilus pseudofirmus (strain ATCC BAA-2126 / JCM 17055 / OF4) (Bacillus pseudofirmus).